We begin with the raw amino-acid sequence, 333 residues long: Transaldolase NQM1 (333 aa).

Lysine 144 functions as the Schiff-base intermediate with substrate in the catalytic mechanism.

The protein belongs to the transaldolase family. Type 1 subfamily. Homodimer.

It catalyses the reaction D-sedoheptulose 7-phosphate + D-glyceraldehyde 3-phosphate = D-erythrose 4-phosphate + beta-D-fructose 6-phosphate. It participates in carbohydrate degradation; pentose phosphate pathway; D-glyceraldehyde 3-phosphate and beta-D-fructose 6-phosphate from D-ribose 5-phosphate and D-xylulose 5-phosphate (non-oxidative stage): step 2/3. Functionally, transaldolase is important for the balance of metabolites in the pentose-phosphate pathway. In Saccharomyces cerevisiae (strain ATCC 204508 / S288c) (Baker's yeast), this protein is Transaldolase NQM1 (NQM1).